Consider the following 1883-residue polypeptide: AF4/FMR2 family member lilli (1883 aa).

The segment covering 1–45 (MAQQQQQQHLQQQQQQHHQQQQLQQLQQQQQLPQYNNNLYNLNYN) has biased composition (low complexity). Disordered regions lie at residues 1-88 (MAQQ…SEGD), 140-311 (INST…EKDI), 329-381 (SIAA…SCTT), 449-540 (MPTP…HHQH), 609-654 (LGGG…HLSR), 796-827 (SISSGSASGSSSSDSAAGEVVPLPGPGETLQI), 844-901 (MQQK…KKHA), 922-962 (TAAA…LAKG), 992-1018 (VAGSRKREHSSNSSSNGNTPTKKLHAA), 1039-1075 (TAAAGSSSDEDSTSSSCSSTKSSNSSSSGSDSEATAT), 1115-1145 (KNNRLYGAGSSSNSSSSETEEQQQQQQQHKQ), 1170-1238 (QHQQ…KSDK), 1358-1413 (YAAE…GART), 1450-1510 (EHGV…DQVS), 1543-1583 (ANGS…KATT), 1595-1641 (QTST…PPSD), and 1783-1803 (PSNSVGSQGSGSNTPPGRIVP). Residues 57-80 (REKYERQQGIQSDDRETSLFEAPR) show a composition bias toward basic and acidic residues. Composition is skewed to low complexity over residues 140–154 (INSTTTTSSSASLLP), 161–178 (QQQQQQQQQQQQHYQQQQ), 223–253 (SASSSSSASNNNSSSATNNATAAAATSASTA), and 362–381 (PLNSPPAASGASSSSLSCTT). The segment covering 450-462 (PTPPKASPTPPTA) has biased composition (pro residues). Thr-458 bears the Phosphothreonine mark. Residues 466–479 (LKSEKNHSLEKQDS) are compositionally biased toward basic and acidic residues. Residues 481-491 (LENDLELSESD) are compositionally biased toward acidic residues. 2 positions are modified to phosphoserine: Ser-488 and Ser-490. Low complexity predominate over residues 500–540 (SAGNSSNSSETDSSESGSEASSKGEAQQQQQQQQQLLHHQH). The span at 609–625 (LGGGGGSGSTGGGGGSS) shows a compositional bias: gly residues. Low complexity-rich tracts occupy residues 626 to 639 (SSGMGNMSSSSSSN) and 796 to 813 (SISSGSASGSSSSDSAAG). Residues 867-877 (PRQKKPRKKKM) show a composition bias toward basic residues. 2 positions are modified to phosphoserine: Ser-887 and Ser-888. The a.T hook DNA-binding region spans 930 to 942 (KKGRGRPRKQQQQ). Residues 939 to 962 (QQQQLQQTQSGNLSSASAGSLAKG) show a composition bias toward low complexity. Ser-953 and Ser-955 each carry phosphoserine. 5 stretches are compositionally biased toward low complexity: residues 1124-1145 (SSSNSSSSETEEQQQQQQQHKQ), 1170-1186 (QHQQQQPLQPQQQQQQQ), 1200-1222 (SSSSDGSSSSSTDSSSTNSSSSS), 1362-1376 (QQQQQQQHLHTQQLH), and 1385-1399 (HYQQQHQPHQQKAQQ). Residues 1450-1467 (EHGVKPEPELDAGYEAKY) show a composition bias toward basic and acidic residues. At Ser-1546 the chain carries Phosphoserine. Phosphothreonine is present on Thr-1548. Low complexity-rich tracts occupy residues 1558 to 1583 (QQQQHQQQQQQQQHQPQHQQQLKATT) and 1595 to 1606 (QTSTTATQQPTT). Pro residues predominate over residues 1614-1625 (TPPPVAPPPPPR). Over residues 1783–1794 (PSNSVGSQGSGS) the composition is skewed to low complexity.

The protein belongs to the AF4 family.

It localises to the nucleus. Has a role in transcriptional regulation. Acts in parallel with the Ras/MAPK and the PI3K/PKB pathways in the control of cell identity and cellular growth. Essential for regulation of the cytoskeleton and cell growth but not for cell proliferation or growth rate. Required specifically for the microtubule-based basal transport of lipid droplets. Plays a partially redundant function downstream of Raf in cell fate specification in the developing eye. Pair-rule protein that regulates embryonic cellularization, gastrulation and segmentation. The protein is AF4/FMR2 family member lilli of Drosophila grimshawi (Hawaiian fruit fly).